Here is a 182-residue protein sequence, read N- to C-terminus: Lipoprotein signal peptidase (182 aa).

3 helical membrane passes run 12–32 (VAVFACVAAAALIVDQLTKAW), 68–88 (ATWVISLLAVVACVALAVAGV), and 91–111 (ISMKWSVALSFAFAGALGNLI). Catalysis depends on residues Asp127 and Asp140. A helical membrane pass occupies residues 135–155 (VGNVADIYLVVAGVVLVILIL).

This sequence belongs to the peptidase A8 family.

The protein resides in the cell membrane. The catalysed reaction is Release of signal peptides from bacterial membrane prolipoproteins. Hydrolyzes -Xaa-Yaa-Zaa-|-(S,diacylglyceryl)Cys-, in which Xaa is hydrophobic (preferably Leu), and Yaa (Ala or Ser) and Zaa (Gly or Ala) have small, neutral side chains.. Its pathway is protein modification; lipoprotein biosynthesis (signal peptide cleavage). This protein specifically catalyzes the removal of signal peptides from prolipoproteins. This is Lipoprotein signal peptidase from Bifidobacterium longum subsp. infantis (strain ATCC 15697 / DSM 20088 / JCM 1222 / NCTC 11817 / S12).